A 286-amino-acid chain; its full sequence is uncharacterized protein (286 aa).

6 consecutive transmembrane segments (helical) span residues 52-74 (ILWT…LIGL), 79-101 (LIAI…FLFL), 142-161 (WWDP…VSFF), 168-190 (VLVF…GAIL), 203-225 (IQAT…VALV), and 257-276 (IIWI…ASFM).

The protein localises to the cell membrane. This is an uncharacterized protein from Archaeoglobus fulgidus (strain ATCC 49558 / DSM 4304 / JCM 9628 / NBRC 100126 / VC-16).